Consider the following 186-residue polypeptide: Transcription factor pgmR (186 aa).

The zn(2)-C6 fungal-type DNA-binding region spans 19–46; the sequence is CDECGAAKLKCDRGHPSCGRCISLGLKC. The disordered stretch occupies residues 52 to 98; it reads RKAGKPRRDAQSATRPPPTPGDSGPPLDYNSFGPTSPPSSVGDGATL.

It localises to the nucleus. In terms of biological role, transcription factor that specifically regulates the expression of the pgm gene cluster that mediates the biosynthesis of cryptic naphthoquinones derived pigments responsible for the coloration of the fruiting bodies. The sequence is that of Transcription factor pgmR from Aspergillus terreus (strain NIH 2624 / FGSC A1156).